Reading from the N-terminus, the 560-residue chain is Putative ABC transporter ATP-binding protein SP_0483 (560 aa).

ABC transporter domains lie at I6 to E247 and F297 to K528. ATP-binding positions include G40 to S47 and G329 to S336.

Belongs to the ABC transporter superfamily.

The protein resides in the cell membrane. Probably part of an ABC transporter complex. Responsible for energy coupling to the transport system. In Streptococcus pneumoniae serotype 4 (strain ATCC BAA-334 / TIGR4), this protein is Putative ABC transporter ATP-binding protein SP_0483.